We begin with the raw amino-acid sequence, 393 residues long: Glucose-1-phosphate adenylyltransferase (393 aa).

Alpha-D-glucose 1-phosphate contacts are provided by residues tyrosine 105, glycine 170, 185 to 186 (EK), and serine 196.

It belongs to the bacterial/plant glucose-1-phosphate adenylyltransferase family. As to quaternary structure, homotetramer.

The catalysed reaction is alpha-D-glucose 1-phosphate + ATP + H(+) = ADP-alpha-D-glucose + diphosphate. It functions in the pathway glycan biosynthesis; glycogen biosynthesis. Functionally, involved in the biosynthesis of ADP-glucose, a building block required for the elongation reactions to produce glycogen. Catalyzes the reaction between ATP and alpha-D-glucose 1-phosphate (G1P) to produce pyrophosphate and ADP-Glc. The sequence is that of Glucose-1-phosphate adenylyltransferase from Clostridium perfringens (strain 13 / Type A).